The chain runs to 124 residues: Desulfoferrodoxin homolog (124 aa).

The Fe cation site is built by Cys-10, Cys-13, Cys-29, Cys-30, His-49, His-69, His-75, Cys-117, and His-120.

Belongs to the desulfoferrodoxin family. Fe(3+) is required as a cofactor. Cu(2+) serves as cofactor.

In Methanothermobacter thermautotrophicus (strain ATCC 29096 / DSM 1053 / JCM 10044 / NBRC 100330 / Delta H) (Methanobacterium thermoautotrophicum), this protein is Desulfoferrodoxin homolog.